We begin with the raw amino-acid sequence, 251 residues long: 5'-nucleotidase SurE (251 aa).

The a divalent metal cation site is built by Asp8, Asp9, Ser39, and Asn90.

Belongs to the SurE nucleotidase family. It depends on a divalent metal cation as a cofactor.

Its subcellular location is the cytoplasm. The enzyme catalyses a ribonucleoside 5'-phosphate + H2O = a ribonucleoside + phosphate. Nucleotidase that shows phosphatase activity on nucleoside 5'-monophosphates. This Colwellia psychrerythraea (strain 34H / ATCC BAA-681) (Vibrio psychroerythus) protein is 5'-nucleotidase SurE.